The following is a 451-amino-acid chain: tRNA-2-methylthio-N(6)-dimethylallyladenosine synthase (451 aa).

Residues 1-116 (MTYFFETYGC…LPQIFDEIKA (116 aa)) form the MTTase N-terminal domain. 6 residues coordinate [4Fe-4S] cluster: C10, C46, C79, C162, C166, and C169. The Radical SAM core domain occupies 148–384 (SPKSFQSYVP…IDLQLKITAK (237 aa)). The TRAM domain occupies 387–451 (KAKLGKKVDI…KGKTFRANLN (65 aa)).

The protein belongs to the methylthiotransferase family. MiaB subfamily. Monomer. It depends on [4Fe-4S] cluster as a cofactor.

Its subcellular location is the cytoplasm. It catalyses the reaction N(6)-dimethylallyladenosine(37) in tRNA + (sulfur carrier)-SH + AH2 + 2 S-adenosyl-L-methionine = 2-methylsulfanyl-N(6)-dimethylallyladenosine(37) in tRNA + (sulfur carrier)-H + 5'-deoxyadenosine + L-methionine + A + S-adenosyl-L-homocysteine + 2 H(+). Its function is as follows. Catalyzes the methylthiolation of N6-(dimethylallyl)adenosine (i(6)A), leading to the formation of 2-methylthio-N6-(dimethylallyl)adenosine (ms(2)i(6)A) at position 37 in tRNAs that read codons beginning with uridine. The chain is tRNA-2-methylthio-N(6)-dimethylallyladenosine synthase from Treponema denticola (strain ATCC 35405 / DSM 14222 / CIP 103919 / JCM 8153 / KCTC 15104).